A 219-amino-acid polypeptide reads, in one-letter code: uncharacterized protein (219 aa).

The signal sequence occupies residues 1–22; the sequence is MKKRRKICYCNTALLLMILLAG. Residue Cys-23 is the site of N-palmitoyl cysteine attachment. Cys-23 carries the S-diacylglycerol cysteine lipid modification. The interval 26-89 is disordered; the sequence is SKDGEAQQPS…SAEEKSKEDN (64 aa). Over residues 32–42 the composition is skewed to polar residues; that stretch reads QQPSNQASAVQ. Over residues 43–61 the composition is skewed to basic and acidic residues; sequence TDEKHTEPEESTKIRKDEA.

The protein resides in the cell membrane. This is an uncharacterized protein from Bacillus subtilis (strain 168).